The sequence spans 151 residues: Large-conductance mechanosensitive channel (151 aa).

The next 2 helical transmembrane spans lie at 19–39 (VGII…GDVL) and 85–105 (GLFI…FFLV).

The protein belongs to the MscL family. In terms of assembly, homopentamer.

Its subcellular location is the cell inner membrane. Functionally, channel that opens in response to stretch forces in the membrane lipid bilayer. May participate in the regulation of osmotic pressure changes within the cell. The protein is Large-conductance mechanosensitive channel of Chlorobaculum parvum (strain DSM 263 / NCIMB 8327) (Chlorobium vibrioforme subsp. thiosulfatophilum).